Consider the following 263-residue polypeptide: Acyl-[acyl-carrier-protein]--UDP-N-acetylglucosamine O-acyltransferase (263 aa).

The protein belongs to the transferase hexapeptide repeat family. LpxA subfamily. Homotrimer.

Its subcellular location is the cytoplasm. It carries out the reaction a (3R)-hydroxyacyl-[ACP] + UDP-N-acetyl-alpha-D-glucosamine = a UDP-3-O-[(3R)-3-hydroxyacyl]-N-acetyl-alpha-D-glucosamine + holo-[ACP]. It participates in glycolipid biosynthesis; lipid IV(A) biosynthesis; lipid IV(A) from (3R)-3-hydroxytetradecanoyl-[acyl-carrier-protein] and UDP-N-acetyl-alpha-D-glucosamine: step 1/6. Functionally, involved in the biosynthesis of lipid A, a phosphorylated glycolipid that anchors the lipopolysaccharide to the outer membrane of the cell. The polypeptide is Acyl-[acyl-carrier-protein]--UDP-N-acetylglucosamine O-acyltransferase (Xanthomonas euvesicatoria pv. vesicatoria (strain 85-10) (Xanthomonas campestris pv. vesicatoria)).